The sequence spans 770 residues: Low-density lipoprotein receptor-related protein 3 (770 aa).

The first 36 residues, methionine 1–alanine 36, serve as a signal peptide directing secretion. Residues valine 37–lysine 496 are Extracellular-facing. 9 disulfide bridges follow: cysteine 43–cysteine 72, cysteine 99–cysteine 120, cysteine 166–cysteine 178, cysteine 173–cysteine 191, cysteine 185–cysteine 200, cysteine 212–cysteine 227, cysteine 219–cysteine 240, cysteine 234–cysteine 249, and cysteine 254–cysteine 282. Residues cysteine 43–glycine 159 form the CUB 1 domain. N-linked (GlcNAc...) asparagine glycosylation is present at asparagine 71. LDL-receptor class A domains are found at residues serine 165–serine 201 and leucine 211–proline 250. N-linked (GlcNAc...) asparagine glycosylation is present at asparagine 199. In terms of domain architecture, CUB 2 spans cysteine 254–lysine 365. Asparagine 359 carries an N-linked (GlcNAc...) asparagine glycan. LDL-receptor class A domains follow at residues alanine 415–phenylalanine 453 and serine 454–leucine 490. Cystine bridges form between cysteine 416-cysteine 430, cysteine 423-cysteine 443, cysteine 437-cysteine 452, cysteine 455-cysteine 467, cysteine 462-cysteine 480, and cysteine 474-cysteine 489. The chain crosses the membrane as a helical span at residues valine 497–glycine 517. The Cytoplasmic portion of the chain corresponds to cysteine 518–cysteine 770. The disordered stretch occupies residues leucine 639–proline 753. Basic and acidic residues predominate over residues arginine 689–cysteine 703.

Belongs to the LDLR family. As to quaternary structure, binds GGA1 and GGA2.

Its subcellular location is the membrane. The protein localises to the coated pit. In terms of biological role, probable receptor, which may be involved in the internalization of lipophilic molecules and/or signal transduction. Its precise role is however unclear, since it does not bind to very low density lipoprotein (VLDL) or to LRPAP1 in vitro. This chain is Low-density lipoprotein receptor-related protein 3 (Lrp3), found in Rattus norvegicus (Rat).